The chain runs to 491 residues: MPGARDALCHQALQLLAELCARGALEHDSCQDFIYHLRDRARPRLRDPDISVSLLTLVVTACGLALFGVSLFVSWKLCWVPWRERGLFSGSKDNNQEPLNYTDTETNEQENSEDFLDPPTPCPDSSMKISHTSPDIPLSTQPGGQENCAHAVRVQRQVTEPTPSARHNSIRRQLNLSNPDFNIQQLQRQEQLTGIGRIKPELYKQRSLDNDDGRRSNSKACGKLNFILKYDCDLEQLIVKIHKAVNLPAKDFSGTSDPYVKIYLLPDRKTKHQTKVHRKTLNPVFDEVFLFPVHYNDLEARKLHFSVYDFDRFSRHDLIGQVVVDHFFDLADFPRECILWKDIEYVTNDNVDLGELMFSLCYLPTAGRLTITIIKARNLKAMDITGASDPYVKVSLMCDGRRLKKRKTSTKRNTLNPVYNEAIVFDVPPESIDQIHLSIAVMDYDRVGHNEVIGVCQVGNEAERLGRDHWSEMLSYPRKPIAHWHSLMEKR.

Residues 1–52 (MPGARDALCHQALQLLAELCARGALEHDSCQDFIYHLRDRARPRLRDPDISV) lie on the Vesicular side of the membrane. Residues 9–31 (CHQALQLLAELCARGALEHDSCQ) form a cysteine motif region. A helical membrane pass occupies residues 53-73 (SLLTLVVTACGLALFGVSLFV). Residues 74-491 (SWKLCWVPWR…AHWHSLMEKR (418 aa)) are Cytoplasmic-facing. Positions 91–104 (SKDNNQEPLNYTDT) are enriched in polar residues. A disordered region spans residues 91-147 (SKDNNQEPLNYTDTETNEQENSEDFLDPPTPCPDSSMKISHTSPDIPLSTQPGGQEN). Acidic residues predominate over residues 105–116 (ETNEQENSEDFL). Residues 127 to 144 (MKISHTSPDIPLSTQPGG) are compositionally biased toward polar residues. Position 177 is a phosphoserine (Ser-177). C2 domains lie at 220 to 341 (ACGK…ILWK) and 352 to 485 (DLGE…AHWH). Residues Asp-251, Asp-257, Asp-309, Phe-310, Asp-311, Ser-314, Asp-317, Asp-383, Asp-389, Asp-443, and Asp-445 each contribute to the Ca(2+) site.

Belongs to the synaptotagmin family. As to quaternary structure, homodimer; disulfide-linked via the cysteine motif. Can also form heterodimers with SYT3, SYT6, SYT7 and SYT10. Interacts with DNAJC5 and SNAP25, but not with HSC70. The interaction with DNAJC5 is stimulated tenfold in presence of calcium while the interaction with SNAP25 is inhibited. It depends on Ca(2+) as a cofactor.

Its subcellular location is the cytoplasmic vesicle. The protein resides in the secretory vesicle. The protein localises to the synaptic vesicle membrane. In terms of biological role, may be involved in Ca(2+)-dependent exocytosis of secretory vesicles through Ca(2+) and phospholipid binding to the C2 domain or may serve as Ca(2+) sensors in the process of vesicular trafficking and exocytosis. This chain is Synaptotagmin-9 (Syt9), found in Mus musculus (Mouse).